Here is a 725-residue protein sequence, read N- to C-terminus: Fatty acid oxidation complex subunit alpha (725 aa).

The interval 1 to 189 (MLYKGDTLYL…KIGLVDGVVK (189 aa)) is enoyl-CoA hydratase/isomerase. Asp296 is a substrate binding site. Positions 311–725 (ETPKQAAVLG…RLNQPVRLVL (415 aa)) are 3-hydroxyacyl-CoA dehydrogenase. Residues Met324, Asp343, 400–402 (VVE), Lys407, and Ser429 contribute to the NAD(+) site. His450 serves as the catalytic For 3-hydroxyacyl-CoA dehydrogenase activity. Asn453 lines the NAD(+) pocket. Residues Asn500 and Tyr660 each contribute to the substrate site.

It in the N-terminal section; belongs to the enoyl-CoA hydratase/isomerase family. This sequence in the C-terminal section; belongs to the 3-hydroxyacyl-CoA dehydrogenase family. As to quaternary structure, heterotetramer of two alpha chains (FadB) and two beta chains (FadA).

It carries out the reaction a (3S)-3-hydroxyacyl-CoA + NAD(+) = a 3-oxoacyl-CoA + NADH + H(+). It catalyses the reaction a (3S)-3-hydroxyacyl-CoA = a (2E)-enoyl-CoA + H2O. The catalysed reaction is a 4-saturated-(3S)-3-hydroxyacyl-CoA = a (3E)-enoyl-CoA + H2O. The enzyme catalyses (3S)-3-hydroxybutanoyl-CoA = (3R)-3-hydroxybutanoyl-CoA. It carries out the reaction a (3Z)-enoyl-CoA = a 4-saturated (2E)-enoyl-CoA. It catalyses the reaction a (3E)-enoyl-CoA = a 4-saturated (2E)-enoyl-CoA. The protein operates within lipid metabolism; fatty acid beta-oxidation. Functionally, involved in the aerobic and anaerobic degradation of long-chain fatty acids via beta-oxidation cycle. Catalyzes the formation of 3-oxoacyl-CoA from enoyl-CoA via L-3-hydroxyacyl-CoA. It can also use D-3-hydroxyacyl-CoA and cis-3-enoyl-CoA as substrate. The polypeptide is Fatty acid oxidation complex subunit alpha (Salmonella paratyphi A (strain ATCC 9150 / SARB42)).